The chain runs to 526 residues: Lysine--tRNA ligase (526 aa).

Mg(2+)-binding residues include Glu-431 and Glu-438.

Belongs to the class-II aminoacyl-tRNA synthetase family. Homodimer. Mg(2+) is required as a cofactor.

It is found in the cytoplasm. The enzyme catalyses tRNA(Lys) + L-lysine + ATP = L-lysyl-tRNA(Lys) + AMP + diphosphate. The protein is Lysine--tRNA ligase of Chlamydia felis (strain Fe/C-56) (Chlamydophila felis).